Reading from the N-terminus, the 754-residue chain is Ribosomal RNA large subunit methyltransferase K/L (754 aa).

Residues 46–157 (TAYRLCLWSR…RGEAILSLDL (112 aa)) enclose the THUMP domain.

The protein belongs to the methyltransferase superfamily. RlmKL family.

The protein resides in the cytoplasm. It catalyses the reaction guanosine(2445) in 23S rRNA + S-adenosyl-L-methionine = N(2)-methylguanosine(2445) in 23S rRNA + S-adenosyl-L-homocysteine + H(+). The enzyme catalyses guanosine(2069) in 23S rRNA + S-adenosyl-L-methionine = N(2)-methylguanosine(2069) in 23S rRNA + S-adenosyl-L-homocysteine + H(+). Specifically methylates the guanine in position 2445 (m2G2445) and the guanine in position 2069 (m7G2069) of 23S rRNA. The chain is Ribosomal RNA large subunit methyltransferase K/L from Pseudomonas fluorescens (strain ATCC BAA-477 / NRRL B-23932 / Pf-5).